A 243-amino-acid polypeptide reads, in one-letter code: Ubiquinone/menaquinone biosynthesis C-methyltransferase UbiE (243 aa).

S-adenosyl-L-methionine contacts are provided by residues Thr69, Asp90, and 116–117; that span reads DA.

The protein belongs to the class I-like SAM-binding methyltransferase superfamily. MenG/UbiE family.

The enzyme catalyses a 2-demethylmenaquinol + S-adenosyl-L-methionine = a menaquinol + S-adenosyl-L-homocysteine + H(+). The catalysed reaction is a 2-methoxy-6-(all-trans-polyprenyl)benzene-1,4-diol + S-adenosyl-L-methionine = a 5-methoxy-2-methyl-3-(all-trans-polyprenyl)benzene-1,4-diol + S-adenosyl-L-homocysteine + H(+). Its pathway is quinol/quinone metabolism; menaquinone biosynthesis; menaquinol from 1,4-dihydroxy-2-naphthoate: step 2/2. The protein operates within cofactor biosynthesis; ubiquinone biosynthesis. Functionally, methyltransferase required for the conversion of demethylmenaquinol (DMKH2) to menaquinol (MKH2) and the conversion of 2-polyprenyl-6-methoxy-1,4-benzoquinol (DDMQH2) to 2-polyprenyl-3-methyl-6-methoxy-1,4-benzoquinol (DMQH2). The chain is Ubiquinone/menaquinone biosynthesis C-methyltransferase UbiE from Burkholderia mallei (strain NCTC 10247).